We begin with the raw amino-acid sequence, 116 residues long: uncharacterized protein (116 aa).

This is an uncharacterized protein from Invertebrate iridescent virus 6 (IIV-6).